The primary structure comprises 449 residues: uncharacterized protein (449 aa).

The TRAM domain occupies 3-61; it reads VWQQGATIELRIDSLSHTGEGVGRWQDRVVFVADTVPGDRLRVRLTHVKRQYAHGKVLE. Positions 74, 80, 83, and 161 each coordinate [4Fe-4S] cluster. Positions 283, 312, 333, and 378 each coordinate S-adenosyl-L-methionine. Cysteine 405 (nucleophile) is an active-site residue.

Belongs to the class I-like SAM-binding methyltransferase superfamily. RNA M5U methyltransferase family.

This is an uncharacterized protein from Thermosynechococcus vestitus (strain NIES-2133 / IAM M-273 / BP-1).